The chain runs to 241 residues: Uracil-DNA glycosylase (241 aa).

Catalysis depends on aspartate 71, which acts as the Proton acceptor. The interval 221-241 (ISPIDWSLPPRNELDTTSAGA) is disordered.

Belongs to the uracil-DNA glycosylase (UDG) superfamily. UNG family.

The protein localises to the cytoplasm. The enzyme catalyses Hydrolyzes single-stranded DNA or mismatched double-stranded DNA and polynucleotides, releasing free uracil.. Its function is as follows. Excises uracil residues from the DNA which can arise as a result of misincorporation of dUMP residues by DNA polymerase or due to deamination of cytosine. The sequence is that of Uracil-DNA glycosylase from Xanthomonas oryzae pv. oryzae (strain MAFF 311018).